Reading from the N-terminus, the 512-residue chain is Protein singed (512 aa).

This sequence belongs to the fascin family. Interacts with Rab35, with stronger binding to the Rab35-GTP form compared to the Rab35-GDP form.

It is found in the cytoplasm. Its subcellular location is the cytoskeleton. Functionally, acts as an actin bundling protein. May have a role in the asymmetric organization and/or movement of cytoplasmic components. It has a role in somatic cells during the formation of adult bristles and hairs, and in the female germline during oogenesis. In Drosophila melanogaster (Fruit fly), this protein is Protein singed (sn).